The primary structure comprises 300 residues: Elongator complex protein 5 (300 aa).

Ser-252 carries the phosphoserine modification. The disordered stretch occupies residues 264–300 (QQALLRPRPGQATSHIFYEPDAYDDLDQEDPDDDLDI). Over residues 284–300 (DAYDDLDQEDPDDDLDI) the composition is skewed to acidic residues.

It belongs to the ELP5 family. In terms of assembly, component of the elongator complex which consists of ELP1, ELP2, ELP3, ELP4, ELP5 and ELP6; in the complex, is required for optimal binding of ELP3 to ELP4. In terms of processing, tyrosine-phosphorylated. Ubiquitously expressed with high levels in heart, brain, liver, skeletal muscle and testis.

The protein resides in the nucleus. Its subcellular location is the cytoplasm. It functions in the pathway tRNA modification; 5-methoxycarbonylmethyl-2-thiouridine-tRNA biosynthesis. Functionally, component of the elongator complex which is required for multiple tRNA modifications, including mcm5U (5-methoxycarbonylmethyl uridine), mcm5s2U (5-methoxycarbonylmethyl-2-thiouridine), and ncm5U (5-carbamoylmethyl uridine). The elongator complex catalyzes formation of carboxymethyluridine in the wobble base at position 34 in tRNAs. Involved in cell migration. This chain is Elongator complex protein 5, found in Homo sapiens (Human).